A 1788-amino-acid polypeptide reads, in one-letter code: Glutamine and serine-rich protein 1 (1788 aa).

Low complexity predominate over residues 1–53; the sequence is MDAHYAPAGFAEPPAPPASAATQPAAPAWAYEARVPAAASSPSCSGSSPSLKA. Disordered regions lie at residues 1-69, 472-498, and 532-617; these read MDAH…DVLQ, TRDL…VSQT, and SYSS…SKQD. Polar residues-rich tracts occupy residues 60–69, 478–492, 532–569, and 576–594; these read PSQSESDVLQ, VSES…SQGL, SYSS…SAQP, and VQSS…SSIP. Phosphoserine occurs at positions 670 and 940. Thr-1003 carries the post-translational modification Phosphothreonine. Phosphoserine is present on Ser-1041. Disordered stretches follow at residues 1104-1163 and 1234-1264; these read QPGD…TDVY and IQTT…VSLS. Residue Lys-1112 forms a Glycyl lysine isopeptide (Lys-Gly) (interchain with G-Cter in SUMO2) linkage. Basic and acidic residues predominate over residues 1126–1136; that stretch reads PKEKAKGKEQG. Residue Lys-1137 forms a Glycyl lysine isopeptide (Lys-Gly) (interchain with G-Cter in SUMO2) linkage. A phosphoserine mark is found at Ser-1262, Ser-1281, and Ser-1282. Position 1394 is a phosphothreonine (Thr-1394). A Phosphoserine modification is found at Ser-1401. The tract at residues 1494-1588 is disordered; the sequence is VCSKKPRNKP…DEGFEPPAPS (95 aa). Residues 1510–1537 are compositionally biased toward low complexity; that stretch reads IPSKPSSISKTSDPPVSKTTTTKTPSTK. The span at 1545-1561 shows a compositional bias: basic and acidic residues; sequence IKAEPPPKKRKKWKEEF. Residues 1562–1575 are compositionally biased toward low complexity; it reads SSSQSESSPEVRSS.

Interacts with TET1.

It is found in the chromosome. Functionally, plays an essential role in the protection and maintenance of transcriptional and developmental programs. Protects many bivalent promoters and poised enhancers from hypermethylation, showing a marked preference for these regulatory elements over other types of promoters or enhancers. Mechanistically, cooperates with TET1 and binds to DNA in a common complex to inhibit the binding of DNMT3A/3B and therefore de novo methylation. The protein is Glutamine and serine-rich protein 1 of Mus musculus (Mouse).